Reading from the N-terminus, the 639-residue chain is 1-deoxy-D-xylulose-5-phosphate synthase (639 aa).

Thiamine diphosphate-binding positions include H76 and A117–S119. D148 lines the Mg(2+) pocket. Thiamine diphosphate is bound by residues G149 to S150, N181, Y288, and E370. N181 contacts Mg(2+).

It belongs to the transketolase family. DXPS subfamily. Homodimer. Mg(2+) is required as a cofactor. Thiamine diphosphate serves as cofactor.

It carries out the reaction D-glyceraldehyde 3-phosphate + pyruvate + H(+) = 1-deoxy-D-xylulose 5-phosphate + CO2. The protein operates within metabolic intermediate biosynthesis; 1-deoxy-D-xylulose 5-phosphate biosynthesis; 1-deoxy-D-xylulose 5-phosphate from D-glyceraldehyde 3-phosphate and pyruvate: step 1/1. Functionally, catalyzes the acyloin condensation reaction between C atoms 2 and 3 of pyruvate and glyceraldehyde 3-phosphate to yield 1-deoxy-D-xylulose-5-phosphate (DXP). The polypeptide is 1-deoxy-D-xylulose-5-phosphate synthase (Leptothrix cholodnii (strain ATCC 51168 / LMG 8142 / SP-6) (Leptothrix discophora (strain SP-6))).